A 412-amino-acid polypeptide reads, in one-letter code: Na(+)-translocating NADH-quinone reductase subunit B (412 aa).

3 consecutive transmembrane segments (helical) span residues 57 to 77, 127 to 147, and 163 to 183; these read MILV…NVGL, VFFL…EVLF, and SILF…ALGI. The residue at position 236 (Thr236) is an FMN phosphoryl threonine. 5 helical membrane-spanning segments follow: residues 270 to 290, 297 to 317, 322 to 342, 358 to 378, and 381 to 401; these read GSIG…ILFG, IVAG…VIGS, MFSM…GMMF, WSYG…NPAY, and GMML…YLVV.

This sequence belongs to the NqrB/RnfD family. Composed of six subunits; NqrA, NqrB, NqrC, NqrD, NqrE and NqrF. The cofactor is FMN.

It is found in the cell inner membrane. It carries out the reaction a ubiquinone + n Na(+)(in) + NADH + H(+) = a ubiquinol + n Na(+)(out) + NAD(+). NQR complex catalyzes the reduction of ubiquinone-1 to ubiquinol by two successive reactions, coupled with the transport of Na(+) ions from the cytoplasm to the periplasm. NqrA to NqrE are probably involved in the second step, the conversion of ubisemiquinone to ubiquinol. The polypeptide is Na(+)-translocating NADH-quinone reductase subunit B (Klebsiella pneumoniae (strain 342)).